The sequence spans 142 residues: Phosphoribosyl-AMP cyclohydrolase (142 aa).

Residue D85 participates in Mg(2+) binding. A Zn(2+)-binding site is contributed by C86. Positions 87 and 89 each coordinate Mg(2+). Residues C102 and C109 each contribute to the Zn(2+) site. A disordered region spans residues 120–142 (GEPPTPVGAGERQPASGTADAAP).

Belongs to the PRA-CH family. Homodimer. Requires Mg(2+) as cofactor. Zn(2+) is required as a cofactor.

It localises to the cytoplasm. The enzyme catalyses 1-(5-phospho-beta-D-ribosyl)-5'-AMP + H2O = 1-(5-phospho-beta-D-ribosyl)-5-[(5-phospho-beta-D-ribosylamino)methylideneamino]imidazole-4-carboxamide. It functions in the pathway amino-acid biosynthesis; L-histidine biosynthesis; L-histidine from 5-phospho-alpha-D-ribose 1-diphosphate: step 3/9. In terms of biological role, catalyzes the hydrolysis of the adenine ring of phosphoribosyl-AMP. The polypeptide is Phosphoribosyl-AMP cyclohydrolase (Acidothermus cellulolyticus (strain ATCC 43068 / DSM 8971 / 11B)).